The following is a 533-amino-acid chain: Early growth response protein 1 (533 aa).

Disordered regions lie at residues 1–94 and 161–237; these read MAAA…EQPY and MTNP…PPPA. Residues 68 to 77 show a composition bias toward gly residues; that stretch reads SGGGGGGGSN. Over residues 164–189 the composition is skewed to low complexity; that stretch reads PPTSSSSAPSPAASSSSSASQSPPLS. A Glycyl lysine isopeptide (Lys-Gly) (interchain with G-Cter in SUMO2) cross-link involves residue Lys303. The segment at 316-336 is disordered; the sequence is PSRMRKYPNRPSKTPPHERPY. C2H2-type zinc fingers lie at residues 336 to 360, 366 to 388, and 394 to 416; these read YACP…IRIH, FQCR…IRTH, and FACD…TKIH. The disordered stretch occupies residues 407 to 478; that stretch reads DERKRHTKIH…SSTYPSPAHS (72 aa). A compositionally biased stretch (basic residues) spans 411 to 421; it reads RHTKIHLRQKD. The span at 427-475 shows a compositional bias: low complexity; it reads SVVASPAASSLSSYPSPVATSYPSPATTSFPSPVPTSYSSPGSSTYPSP.

It belongs to the EGR C2H2-type zinc-finger protein family. As to quaternary structure, interacts with SNAI1 and SP1 upon 12-O-tetradecanoylphorbol-13-acetate (TPA) induction. As to expression, detected in lung vasculature and in mononuclear phagocytes. Detected in liver (at protein level). Expressed in the liver in a circadian manner.

The protein localises to the nucleus. It localises to the cytoplasm. Functionally, transcriptional regulator. Recognizes and binds to the DNA sequence 5'-GCG(T/G)GGGCG-3'(EGR-site) in the promoter region of target genes. Binds double-stranded target DNA, irrespective of the cytosine methylation status. Regulates the transcription of numerous target genes, and thereby plays an important role in regulating the response to growth factors, DNA damage, and ischemia. Plays a role in the regulation of cell survival, proliferation and cell death. Activates expression of p53/TP53 and TGFB1, and thereby helps prevent tumor formation. Required for normal progress through mitosis and normal proliferation of hepatocytes after partial hepatectomy. Mediates responses to ischemia and hypoxia; regulates the expression of proteins such as IL1B and CXCL2 that are involved in inflammatory processes and development of tissue damage after ischemia. Regulates biosynthesis of luteinizing hormone (LHB) in the pituitary. Regulates the amplitude of the expression rhythms of clock genes: BMAL1, PER2 and NR1D1 in the liver via the activation of PER1 (clock repressor) transcription. Regulates the rhythmic expression of core-clock gene BMAL1 in the suprachiasmatic nucleus (SCN). The polypeptide is Early growth response protein 1 (Egr1) (Mus musculus (Mouse)).